A 412-amino-acid polypeptide reads, in one-letter code: MGLKLSRGPVKEKSPLEFTRVHILTYFTTNSYLRNLVSKKRRRLIIGGYDLDMSYISDKLLAMSFPAERMRAVYRNPLWQVKSVLDMRHPDHYKVYNLCIEESYDPDNFYGRVERFPFDDNHVPSLKMIQLFCESVHSWLSLDPKNIAVVHCMAGKGRTGLMVSAYLVYGGMSAEEALEMYASRRTTNNNGVSIPSQRRYVKYWSDLLSFSKKGPPEVKLPQEHSRELLRIRLYDTANVDSVFFVVSELQEVPNEMYRPSVELARGCCRQFKKGYCRSSSPRYYISHVNCDSEEDEEVTDGEEPHLVVQMDTESSIIDEKTCLDFYFDKPVRVSGDIRITFYQKMIGSRLFYTCFNTAFITNGLLQFSIGELDKVGGNGRSISGPDFSLELLFGPACSKFGKFLSRDDLSLS.

The region spanning 42-211 is the Phosphatase tensin-type domain; the sequence is RRLIIGGYDL…KYWSDLLSFS (170 aa). Cys-152 serves as the catalytic Phosphocysteine intermediate. In terms of domain architecture, C2 tensin-type spans 239-396; that stretch reads VDSVFFVVSE…FSLELLFGPA (158 aa).

It belongs to the PTEN phosphatase protein family. As to expression, expressed exclusively in pollen grains during the late stage of development (at protein level).

The catalysed reaction is O-phospho-L-tyrosyl-[protein] + H2O = L-tyrosyl-[protein] + phosphate. The enzyme catalyses a 1,2-diacyl-sn-glycero-3-phospho-(1D-myo-inositol-3,4,5-trisphosphate) + H2O = a 1,2-diacyl-sn-glycero-3-phospho-(1D-myo-inositol-4,5-bisphosphate) + phosphate. Inhibited by vanadate. In terms of biological role, protein tyrosine phosphatase that also exhibits lipid phosphatase activity. Can use phosphatidylinositol substrates such as PtdIns(3,4,5)P(3) as substrate. Pollen-specific phosphatase required for pollen development. The protein is Phosphatidylinositol 3,4,5-trisphosphate 3-phosphatase and protein-tyrosine-phosphatase PTEN1 of Arabidopsis thaliana (Mouse-ear cress).